Reading from the N-terminus, the 268-residue chain is Ribosomal RNA small subunit methyltransferase A (268 aa).

The S-adenosyl-L-methionine site is built by Asn-17, Leu-19, Gly-44, Glu-65, Asp-89, and Asn-110.

It belongs to the class I-like SAM-binding methyltransferase superfamily. rRNA adenine N(6)-methyltransferase family. RsmA subfamily.

The protein localises to the cytoplasm. The catalysed reaction is adenosine(1518)/adenosine(1519) in 16S rRNA + 4 S-adenosyl-L-methionine = N(6)-dimethyladenosine(1518)/N(6)-dimethyladenosine(1519) in 16S rRNA + 4 S-adenosyl-L-homocysteine + 4 H(+). Functionally, specifically dimethylates two adjacent adenosines (A1518 and A1519) in the loop of a conserved hairpin near the 3'-end of 16S rRNA in the 30S particle. May play a critical role in biogenesis of 30S subunits. The protein is Ribosomal RNA small subunit methyltransferase A of Acidithiobacillus ferrooxidans (strain ATCC 53993 / BNL-5-31) (Leptospirillum ferrooxidans (ATCC 53993)).